The following is a 727-amino-acid chain: YTH domain-containing protein 1 (727 aa).

Over residues 1–12 (MAADSREEKDGE) the composition is skewed to basic and acidic residues. Residues 1–338 (MAADSREEKD…KHEKLSSSVR (338 aa)) are disordered. Ser-35 carries the phosphoserine modification. Residues 50 to 59 (DRMESTDTKR) show a composition bias toward basic and acidic residues. Residues 63-90 (SVHSRQLVSKPLSSSVSNNKRIVSTKGK) are compositionally biased toward polar residues. Basic and acidic residues predominate over residues 91–115 (SATEYKNEEYQRSERNKRLDADRKI). Lys-96 is covalently cross-linked (Glycyl lysine isopeptide (Lys-Gly) (interchain with G-Cter in SUMO2)). 2 positions are modified to phosphoserine: Ser-118 and Ser-120. Over residues 124–144 (EPYKNQPEKTCVRKRDPERRA) the composition is skewed to basic and acidic residues. Ser-146 is modified (phosphoserine). Phosphothreonine is present on Thr-148. Basic and acidic residues-rich tracts occupy residues 151 to 163 (GSERIGLEVDRRA) and 170 to 185 (SKEEVNSEEYGSDHET). Acidic residues predominate over residues 199–254 (ENEEEGVEEDVEEDEEVEEDAEEDEEVDEDGEEEEEEEEEEEEEEEEEEEEYEQDE). A compositionally biased stretch (basic and acidic residues) spans 255 to 270 (RDQKEEGNDYDTRSEA). Over residues 280-289 (FTDGSVRSGS) the composition is skewed to polar residues. Ser-308, Ser-315, Ser-317, Ser-318, and Ser-320 each carry phosphoserine. Residues 315 to 325 (SGSSASESYAG) show a composition bias toward low complexity. The YTH domain occupies 355–492 (ARFFLIKSNN…ECGTQLCLLF (138 aa)). RNA is bound by residues 361 to 363 (KSN) and 377 to 378 (WS). The residue at position 424 (Ser-424) is a Phosphoserine. An RNA-binding site is contributed by Trp-428. Ser-435 is subject to Phosphoserine. Asp-476 is an RNA binding site. Residues 508–523 (RHKRRMHSQPRSRGRP) are compositionally biased toward basic residues. Disordered stretches follow at residues 508 to 564 (RHKR…PGYL), 607 to 643 (GMPPYPGMEQPPHHPYYQHHAPPPQAHPPYSGHHPVP), and 669 to 727 (AVVS…RYRR). The segment covering 524 to 564 (SRREPVRDVGRRRPEDYDIHNSRKKPRIDYPPEFHQRPGYL) has biased composition (basic and acidic residues). Position 545 is a phosphoserine (Ser-545). The segment covering 679–727 (RERDRERERDRPRDNRRDRERDRGRDRERERERLCDRDRDRGERGRYRR) has biased composition (basic and acidic residues).

As to quaternary structure, interacts with SRSF1. Interacts with SRSF2. Interacts with SRSF3. Interacts with SRSF7. Interacts with SRSF10. Interacts with CPSF6. Interacts with KHDRBS1/SAM68. Interacts with TRA2B. Interacts with KHDRBS3. Interacts with EMD. Interacts with RBMX. Interacts with ZCCHC8. In terms of processing, tyrosine phosphorylated.

The protein localises to the nucleus. Its subcellular location is the nucleus speckle. Functionally, regulator of alternative splicing that specifically recognizes and binds N6-methyladenosine (m6A)-containing RNAs. M6A is a modification present at internal sites of mRNAs and some non-coding RNAs and plays a role in the efficiency of mRNA splicing, processing and stability. Acts as a key regulator of exon-inclusion or exon-skipping during alternative splicing via interaction with mRNA splicing factors SRSF3 and SRSF10. Specifically binds m6A-containing mRNAs and promotes recruitment of SRSF3 to its mRNA-binding elements adjacent to m6A sites, leading to exon-inclusion during alternative splicing. In contrast, interaction with SRSF3 prevents interaction with SRSF10, a splicing factor that promotes exon skipping: this prevents SRSF10 from binding to its mRNA-binding sites close to m6A-containing regions, leading to inhibit exon skipping during alternative splicing. May also regulate alternative splice site selection. Also involved in nuclear export of m6A-containing mRNAs via interaction with SRSF3: interaction with SRSF3 facilitates m6A-containing mRNA-binding to both SRSF3 and NXF1, promoting mRNA nuclear export. Involved in S-adenosyl-L-methionine homeostasis by regulating expression of MAT2A transcripts, probably by binding m6A-containing MAT2A mRNAs. Also recognizes and binds m6A on other RNA molecules. Involved in random X inactivation mediated by Xist RNA: recognizes and binds m6A-containing Xist and promotes transcription repression activity of Xist. Also recognizes and binds m6A-containing single-stranded DNA. Involved in germline development: required for spermatogonial development in males and oocyte growth and maturation in females, probably via its role in alternative splicing. This chain is YTH domain-containing protein 1, found in Homo sapiens (Human).